A 374-amino-acid polypeptide reads, in one-letter code: MSLPNQSLEGLPQEASNRSLNATGAWDPEVLQALRISLVVVLSIITLATVLSNAFVLTTILLTKKLHTPANYLIGSLATTDLLVSILVMPISIAYTTTRTWNFGQILCDIWVSSDITCCTASILHLCVIALDRYWAITDALEYSKRRTAGHAAAMIAAVWAISICISIPPLFWRQATAHEEMSDCLVNTSQISYTIYSTCGAFYIPSILLIILYGRIYVAARSRILNPPSLYGKRFTTAQLITGSAGSSLCSLNPSLHESHTHTVGSPLFFNQVKIKLADSILERKRISAARERKATKTLGIILGAFIICWLPFFVVSLVLPICRDSCWIHPALFDFFTWLGYLNSLINPVIYTVFNEDFRQAFQRVVHFRKAS.

Residues Asn-5, Asn-17, and Asn-21 are each glycosylated (N-linked (GlcNAc...) asparagine). The next 3 helical transmembrane spans lie at 36–61 (ISLV…TTIL), 73–94 (LIGS…ISIA), and 107–131 (LCDI…VIAL). Cysteines 108 and 185 form a disulfide. Serotonin-binding residues include Asp-115 and Cys-119. The short motif at 132–134 (DRY) is the DRY motif; important for ligand-induced conformation changes element. 4 consecutive transmembrane segments (helical) span residues 152–173 (AAAM…PLFW), 192–215 (ISYT…ILYG), 298–323 (KTLG…VLPI), and 333–356 (ALFD…YTVF). Ser-318 serves as a coordination point for serotonin. The short motif at 349–353 (NPVIY) is the NPxxY motif; important for ligand-induced conformation changes and signaling element.

This sequence belongs to the G-protein coupled receptor 1 family. Homodimer. Heterodimer with HTR1B. Detected in dorsal raphe.

The protein resides in the cell membrane. In terms of biological role, G-protein coupled receptor for 5-hydroxytryptamine (serotonin). Also functions as a receptor for ergot alkaloid derivatives, various anxiolytic and antidepressant drugs and other psychoactive substances. Ligand binding causes a conformation change that triggers signaling via guanine nucleotide-binding proteins (G proteins) and modulates the activity of downstream effectors, such as adenylate cyclase. HTR1D is coupled to G(i)/G(o) G alpha proteins and mediates inhibitory neurotransmission by inhibiting adenylate cyclase activity. Regulates the release of 5-hydroxytryptamine in the brain, and thereby affects neural activity. May also play a role in regulating the release of other neurotransmitters. May play a role in vasoconstriction. In Rattus norvegicus (Rat), this protein is 5-hydroxytryptamine receptor 1D (Htr1d).